We begin with the raw amino-acid sequence, 254 residues long: MNILISNDDGYHAQGIQTLAETLRDAGHSVTVIAPDRNRSAASSCLTLMEPIRVHQLDEFNYAVIAGTPADCVHLALNGFFEQSFDLVISGINHGANLGDDVVYSGTVAAALEGRHLPYPSLAISLVGRKSEGHLFGNNHFDTAAKVVLDLLPKVQKGIVPARQILNINVPDLPYEQVKGVMITRLGHRSPAAEIVKREDPRGATIYWLGANGVPVDASEGTDFYALAHNYVSVTPIQADMTAHYSIQALKDTF.

The a divalent metal cation site is built by Asp-8, Asp-9, Ser-40, and Asn-93.

Belongs to the SurE nucleotidase family. A divalent metal cation serves as cofactor.

It localises to the cytoplasm. The catalysed reaction is a ribonucleoside 5'-phosphate + H2O = a ribonucleoside + phosphate. Functionally, nucleotidase that shows phosphatase activity on nucleoside 5'-monophosphates. In Actinobacillus pleuropneumoniae serotype 5b (strain L20), this protein is 5'-nucleotidase SurE.